A 361-amino-acid polypeptide reads, in one-letter code: Protein YIM1-2 (361 aa).

It belongs to the YIM1 family.

The protein resides in the lipid droplet. The protein localises to the mitochondrion. This chain is Protein YIM1-2 (YIM1-2), found in Lachancea thermotolerans (strain ATCC 56472 / CBS 6340 / NRRL Y-8284) (Yeast).